The primary structure comprises 774 residues: Transcription factor MBS1 (774 aa).

Residues 37–143 form the HTH APSES-type domain; that stretch reads EITFYDSGVP…YVPTSVSPPP (107 aa). The H-T-H motif DNA-binding region spans 68 to 89; it reads ATQILKVAGFDKPQRTRVLERE. Disordered stretches follow at residues 135 to 180 and 209 to 229; these read VPTS…SAAA and RVSL…VASV. Residues 155–165 show a composition bias toward basic and acidic residues; that stretch reads ARRDKEKETGR. Polar residues predominate over residues 166-176; sequence TKATPSRTGPT. ANK repeat units follow at residues 348 to 377 and 467 to 496; these read DGHT…SIFA and EGET…NPKI. Positions 752-774 are disordered; the sequence is EEENDNQVYNTSAGESGPSSWVQ. The segment covering 757-774 has biased composition (polar residues); it reads NQVYNTSAGESGPSSWVQ.

It localises to the nucleus. Its function is as follows. Transcription factor that positively regulates ergosterol biosynthesis and thereby affects polyene and azole drug susceptibility. Plays a role in maintenance of membrane stability and osmotic stress response. Involved in genotoxic and oxidative stress responses. Also promotes production of melanin and capsule and thereby is required for full virulence. The protein is Transcription factor MBS1 of Cryptococcus neoformans var. grubii serotype A (strain H99 / ATCC 208821 / CBS 10515 / FGSC 9487) (Filobasidiella neoformans var. grubii).